A 279-amino-acid polypeptide reads, in one-letter code: Proline-rich protein 23D1 (279 aa).

2 disordered regions span residues 1–60 (MYGY…PHLN) and 247–270 (LRPMPPSPSPGPQVYHRVHHRPPS). Polar residues predominate over residues 15–33 (TEPQNDNEGETSLATTQMN).

Belongs to the PRR23 family.

The protein is Proline-rich protein 23D1 (PRR23D1) of Homo sapiens (Human).